The chain runs to 355 residues: dTDP-D-glucose 4,6-dehydratase (355 aa).

T142 serves as a coordination point for substrate. The active-site Proton donor is the D143. Catalysis depends on proton acceptor residues E144 and Y166.

Belongs to the NAD(P)-dependent epimerase/dehydratase family. dTDP-glucose dehydratase subfamily. NAD(+) serves as cofactor.

The enzyme catalyses dTDP-alpha-D-glucose = dTDP-4-dehydro-6-deoxy-alpha-D-glucose + H2O. The polypeptide is dTDP-D-glucose 4,6-dehydratase (TGDS) (Bos taurus (Bovine)).